A 434-amino-acid polypeptide reads, in one-letter code: 5-methylthioadenosine/S-adenosylhomocysteine deaminase (434 aa).

Zn(2+) is bound by residues H66 and H68. Substrate-binding residues include E95, R148, and H188. Residue H215 participates in Zn(2+) binding. Residues E218 and D304 each contribute to the substrate site. Position 304 (D304) interacts with Zn(2+).

Belongs to the metallo-dependent hydrolases superfamily. MTA/SAH deaminase family. The cofactor is Zn(2+).

It catalyses the reaction S-adenosyl-L-homocysteine + H2O + H(+) = S-inosyl-L-homocysteine + NH4(+). The enzyme catalyses S-methyl-5'-thioadenosine + H2O + H(+) = S-methyl-5'-thioinosine + NH4(+). Functionally, catalyzes the deamination of 5-methylthioadenosine and S-adenosyl-L-homocysteine into 5-methylthioinosine and S-inosyl-L-homocysteine, respectively. Is also able to deaminate adenosine. This is 5-methylthioadenosine/S-adenosylhomocysteine deaminase from Shouchella clausii (strain KSM-K16) (Alkalihalobacillus clausii).